The following is a 531-amino-acid chain: MATPSSIPAEPKRDVVNRIHRVTRGNRSLWYQMTVLQQPERARACGSGSKANSDRRPVDPPPVVELRIIEGPSVEEGKDITFDYNANFFLYASLEHARPLARGRVNTPAAGNPPILTGVPASGMAYLDRPTEAGYFIFPDLSVRHEGLYILTFSLFETTKEERDFDLEPADGDLPPGVDYRMEIKTDPFSVYSAKKFPGLMESTQLSKTVADQGCPVRIRRDVRMRKRESKPGAGNSNSGGNGFERREEDFGRRRTITPASEDPHSIRNRSHSNSSEQRTPYTDASRRPSMVDAYPPPPPPPPSYEPAPSASRHLDFGDSSAAQYPTPRQYAHQPGLQITPGPPSASYAPTSQSPYSKTDAPYGYVNRNIPPSCPSPAPSLKHELYDRRQSTSTYVPPSPSVYSTEGHHRRDSRPSYPPTPVAAPRPRPMHSQTSLPALKIDQLVSPVSPLPPIEPQTGPAPELPPINVGGKRKHESVFAQSTRPLHNGQRQVDPHYGRSHRGYSPDHDQGWYSRADGQISSVQFNRYYDE.

In terms of domain architecture, Velvet spans 26–220; the sequence is NRSLWYQMTV…ADQGCPVRIR (195 aa). The Nuclear localization signal motif lies at 40-45; that stretch reads ERARAC. 2 disordered regions span residues 206–435 and 447–517; these read LSKT…SQTS and PVSP…SRAD. The segment covering 244 to 253 has biased composition (basic and acidic residues); the sequence is FERREEDFGR. The segment covering 295 to 306 has biased composition (pro residues); it reads YPPPPPPPPSYE. Positions 348–357 are enriched in polar residues; that stretch reads YAPTSQSPYS. Residues 381–390 are compositionally biased toward basic and acidic residues; that stretch reads LKHELYDRRQ. Positions 391-405 are enriched in low complexity; it reads STSTYVPPSPSVYST. Over residues 416-427 the composition is skewed to pro residues; that stretch reads SYPPTPVAAPRP. Residues 430-461 are PEST; it reads MHSQTSLPALKIDQLVSPVSPLPPIEPQTGPA. Polar residues predominate over residues 479–491; the sequence is FAQSTRPLHNGQR.

This sequence belongs to the velvet family. VeA subfamily. As to quaternary structure, component of the heterotrimeric velvet complex composed of LAE1, VE1 and VELB; VE1 acting as a bridging protein between LAE1 and VELB. Interacts with VELB and VELC.

The protein resides in the nucleus. It localises to the cytoplasm. Its function is as follows. Component of the velvet transcription factor complex that controls sexual/asexual developmental ratio in response to light, promoting sexual development in the darkness while stimulating asexual sporulation under illumination. The velvet complex hat acts as a global regulator for secondary metabolite gene expression. Controls the expression of the cycotoxins fumonisins and fusarins gene cluster. Involved in cell wall integrity, cell surface hydrophobicity, hyphal polarity and conidiation pattern. Required for pathogenicity against maize seedlings. Involved in oxidative stress resistance by positively regulating the transcription of the catalase-encoding gene CAT2. The sequence is that of Developmental and secondary metabolism regulator VE1 from Gibberella moniliformis (strain M3125 / FGSC 7600) (Maize ear and stalk rot fungus).